The chain runs to 287 residues: rRNA adenine N-6-methyltransferase (287 aa).

Residues 1–13 are compositionally biased toward basic residues; sequence MKKKNHKYRGKKL. The tract at residues 1–21 is disordered; it reads MKKKNHKYRGKKLNRGESPNF. S-adenosyl-L-methionine-binding residues include histidine 25, methionine 27, glycine 52, glutamate 73, aspartate 98, and asparagine 114.

It belongs to the class I-like SAM-binding methyltransferase superfamily. rRNA adenine N(6)-methyltransferase family. Homodimer.

Functionally, involved in erythromycin resistance. The polypeptide is rRNA adenine N-6-methyltransferase (ermJ) (Bacillus anthracis).